Reading from the N-terminus, the 244-residue chain is Small ribosomal subunit protein uS3 (244 aa).

Positions 39–107 constitute a KH type-2 domain; sequence VREMLRKKLA…PAHINVTEVR (69 aa). The segment at 213–244 is disordered; that stretch reads VGQEKQDDSPRNDRNDRGDRGDRPSRPAREAR. Basic and acidic residues predominate over residues 216–244; the sequence is EKQDDSPRNDRNDRGDRGDRPSRPAREAR.

This sequence belongs to the universal ribosomal protein uS3 family. As to quaternary structure, part of the 30S ribosomal subunit. Forms a tight complex with proteins S10 and S14.

In terms of biological role, binds the lower part of the 30S subunit head. Binds mRNA in the 70S ribosome, positioning it for translation. This Xanthomonas oryzae pv. oryzae (strain MAFF 311018) protein is Small ribosomal subunit protein uS3.